Reading from the N-terminus, the 702-residue chain is Ribosomal RNA large subunit methyltransferase K/L (702 aa).

The region spanning 43–154 is the THUMP domain; the sequence is LIYQSLMWSR…KETASIALDL (112 aa).

The protein belongs to the methyltransferase superfamily. RlmKL family.

The protein localises to the cytoplasm. It carries out the reaction guanosine(2445) in 23S rRNA + S-adenosyl-L-methionine = N(2)-methylguanosine(2445) in 23S rRNA + S-adenosyl-L-homocysteine + H(+). The catalysed reaction is guanosine(2069) in 23S rRNA + S-adenosyl-L-methionine = N(2)-methylguanosine(2069) in 23S rRNA + S-adenosyl-L-homocysteine + H(+). Specifically methylates the guanine in position 2445 (m2G2445) and the guanine in position 2069 (m7G2069) of 23S rRNA. The polypeptide is Ribosomal RNA large subunit methyltransferase K/L (Salmonella typhi).